The sequence spans 346 residues: Uroporphyrinogen decarboxylase (346 aa).

Substrate contacts are provided by residues 26–30 (RQAGR), phenylalanine 45, aspartate 76, tyrosine 153, serine 208, and histidine 323.

Belongs to the uroporphyrinogen decarboxylase family. In terms of assembly, homodimer.

It localises to the cytoplasm. The enzyme catalyses uroporphyrinogen III + 4 H(+) = coproporphyrinogen III + 4 CO2. Its pathway is porphyrin-containing compound metabolism; protoporphyrin-IX biosynthesis; coproporphyrinogen-III from 5-aminolevulinate: step 4/4. Functionally, catalyzes the decarboxylation of four acetate groups of uroporphyrinogen-III to yield coproporphyrinogen-III. The protein is Uroporphyrinogen decarboxylase of Prochlorococcus marinus subsp. pastoris (strain CCMP1986 / NIES-2087 / MED4).